Consider the following 251-residue polypeptide: 3-deoxy-manno-octulosonate cytidylyltransferase (251 aa).

The protein belongs to the KdsB family.

The protein localises to the cytoplasm. The catalysed reaction is 3-deoxy-alpha-D-manno-oct-2-ulosonate + CTP = CMP-3-deoxy-beta-D-manno-octulosonate + diphosphate. The protein operates within nucleotide-sugar biosynthesis; CMP-3-deoxy-D-manno-octulosonate biosynthesis; CMP-3-deoxy-D-manno-octulosonate from 3-deoxy-D-manno-octulosonate and CTP: step 1/1. Its pathway is bacterial outer membrane biogenesis; lipopolysaccharide biosynthesis. Activates KDO (a required 8-carbon sugar) for incorporation into bacterial lipopolysaccharide in Gram-negative bacteria. The chain is 3-deoxy-manno-octulosonate cytidylyltransferase from Geotalea uraniireducens (strain Rf4) (Geobacter uraniireducens).